The sequence spans 331 residues: 2-oxoglutarate-dependent dioxygenase (331 aa).

The Fe2OG dioxygenase domain maps to 186–292 (PACPLRLLHY…RYSVVFFMDG (107 aa)). 3 residues coordinate Fe cation: histidine 214, aspartate 216, and histidine 272. Arginine 283 is a 2-oxoglutarate binding site.

The protein belongs to the iron/ascorbate-dependent oxidoreductase family. Fe(2+) is required as a cofactor.

It functions in the pathway mycotoxin biosynthesis. Its function is as follows. 2-oxoglutarate-dependent dioxygenase; part of the gene cluster that mediates the biosynthesis of the selective antifungal agent ascochitine, an o-quinone methide that plays a possible protective role against other microbial competitors in nature and is considered to be important for pathogenicity of legume-associated Didymella species. The pathway probably begins with the synthesis of a keto-aldehyde intermediate by the ascochitine non-reducing polyketide synthase pksAC from successive condensations of 4 malonyl-CoA units, presumably with a simple acetyl-CoA starter unit. Release of the keto-aldehyde intermediate is consistent with the presence of the C-terminal reductive release domain. The HR-PKS (orf7) probably makes a diketide starter unit which is passed to the non-reducing polyketide synthase pksAC for further extension, producing ascochital and ascochitine. The aldehyde dehydrogenase (orf1), the 2-oxoglutarate-dependent dioxygenase (orf3) and the dehydrogenase (orf9) are probably involved in subsequent oxidations of methyl groups to the carboxylic acid of the heterocyclic ring. The ascochitine gene cluster also includes a gene encoding a short peptide with a cupin domain (orf2) that is often found in secondary metabolite gene clusters and which function has still to be determined. This Didymella fabae (Leaf and pod spot disease fungus) protein is 2-oxoglutarate-dependent dioxygenase.